The chain runs to 126 residues: Holo-[acyl-carrier-protein] synthase (126 aa).

Residues Asp8 and Glu57 each contribute to the Mg(2+) site.

Belongs to the P-Pant transferase superfamily. AcpS family. Mg(2+) is required as a cofactor.

Its subcellular location is the cytoplasm. The catalysed reaction is apo-[ACP] + CoA = holo-[ACP] + adenosine 3',5'-bisphosphate + H(+). Transfers the 4'-phosphopantetheine moiety from coenzyme A to a Ser of acyl-carrier-protein. The protein is Holo-[acyl-carrier-protein] synthase of Trichlorobacter lovleyi (strain ATCC BAA-1151 / DSM 17278 / SZ) (Geobacter lovleyi).